The following is a 235-amino-acid chain: Nucleoside diphosphate kinase 4, chloroplastic (235 aa).

ATP contacts are provided by lysine 93, phenylalanine 141, arginine 169, threonine 175, arginine 186, and asparagine 196. Histidine 199 serves as the catalytic Pros-phosphohistidine intermediate.

It belongs to the NDK family. Homohexamer. Mg(2+) is required as a cofactor.

Its subcellular location is the plastid. The protein localises to the chloroplast thylakoid lumen. The catalysed reaction is a 2'-deoxyribonucleoside 5'-diphosphate + ATP = a 2'-deoxyribonucleoside 5'-triphosphate + ADP. It carries out the reaction a ribonucleoside 5'-diphosphate + ATP = a ribonucleoside 5'-triphosphate + ADP. Major role in the synthesis of nucleoside triphosphates other than ATP. The ATP gamma phosphate is transferred to the NDP beta phosphate via a ping-pong mechanism, using a phosphorylated active-site intermediate. Shows the highest specificity towards GDP. In Spinacia oleracea (Spinach), this protein is Nucleoside diphosphate kinase 4, chloroplastic (NDK4).